The following is a 100-amino-acid chain: Co-chaperonin GroES (100 aa).

Belongs to the GroES chaperonin family. In terms of assembly, heptamer of 7 subunits arranged in a ring. Interacts with the chaperonin GroEL.

It is found in the cytoplasm. Functionally, together with the chaperonin GroEL, plays an essential role in assisting protein folding. The GroEL-GroES system forms a nano-cage that allows encapsulation of the non-native substrate proteins and provides a physical environment optimized to promote and accelerate protein folding. GroES binds to the apical surface of the GroEL ring, thereby capping the opening of the GroEL channel. This chain is Co-chaperonin GroES, found in Mycobacterium tuberculosis (strain CDC 1551 / Oshkosh).